A 580-amino-acid chain; its full sequence is Arginine--tRNA ligase (580 aa).

The short motif at 123–133 (PNLAKEMHVGH) is the 'HIGH' region element.

This sequence belongs to the class-I aminoacyl-tRNA synthetase family. In terms of assembly, monomer.

It is found in the cytoplasm. It carries out the reaction tRNA(Arg) + L-arginine + ATP = L-arginyl-tRNA(Arg) + AMP + diphosphate. The protein is Arginine--tRNA ligase of Pseudoalteromonas translucida (strain TAC 125).